Consider the following 176-residue polypeptide: Macro domain-containing protein mll7730 (176 aa).

In terms of domain architecture, Macro spans 1–174 (MSKALDRIRI…LYLRAVAALR (174 aa)).

Belongs to the MacroD-type family.

The polypeptide is Macro domain-containing protein mll7730 (Mesorhizobium japonicum (strain LMG 29417 / CECT 9101 / MAFF 303099) (Mesorhizobium loti (strain MAFF 303099))).